The sequence spans 429 residues: Adenylosuccinate synthetase (429 aa).

GTP-binding positions include 12–18 and 40–42; these read GDEGKGK and GHT. The Proton acceptor role is filled by aspartate 13. Residues aspartate 13 and glycine 40 each contribute to the Mg(2+) site. IMP contacts are provided by residues 13–16, 38–41, threonine 129, arginine 143, glutamine 223, threonine 238, and arginine 302; these read DEGK and NAGH. Catalysis depends on histidine 41, which acts as the Proton donor. 298–304 is a binding site for substrate; that stretch reads VVTGRKR. GTP is bound by residues arginine 304, 330 to 332, and 412 to 414; these read KLD and STS.

It belongs to the adenylosuccinate synthetase family. In terms of assembly, homodimer. Mg(2+) is required as a cofactor.

It is found in the cytoplasm. It carries out the reaction IMP + L-aspartate + GTP = N(6)-(1,2-dicarboxyethyl)-AMP + GDP + phosphate + 2 H(+). Its pathway is purine metabolism; AMP biosynthesis via de novo pathway; AMP from IMP: step 1/2. Its function is as follows. Plays an important role in the de novo pathway of purine nucleotide biosynthesis. Catalyzes the first committed step in the biosynthesis of AMP from IMP. This Brucella anthropi (strain ATCC 49188 / DSM 6882 / CCUG 24695 / JCM 21032 / LMG 3331 / NBRC 15819 / NCTC 12168 / Alc 37) (Ochrobactrum anthropi) protein is Adenylosuccinate synthetase.